A 585-amino-acid chain; its full sequence is Pyruvate kinase (585 aa).

Position 32 (Arg32) interacts with substrate. K(+)-binding residues include Asn34, Ser36, Asp66, and Thr67. ATP is bound at residue 34 to 37 (NFSH). ATP is bound by residues Arg73 and Lys156. Glu221 provides a ligand contact to Mg(2+). The substrate site is built by Gly244, Asp245, and Thr277. Asp245 is a Mg(2+) binding site.

Belongs to the pyruvate kinase family. It in the C-terminal section; belongs to the PEP-utilizing enzyme family. Mg(2+) is required as a cofactor. It depends on K(+) as a cofactor.

It catalyses the reaction pyruvate + ATP = phosphoenolpyruvate + ADP + H(+). Its pathway is carbohydrate degradation; glycolysis; pyruvate from D-glyceraldehyde 3-phosphate: step 5/5. The chain is Pyruvate kinase (pyk) from Staphylococcus aureus (strain USA300).